A 427-amino-acid chain; its full sequence is Trigger factor (427 aa).

The region spanning 163 to 248 (GDTVVIDFVG…IHEVKTKEVP (86 aa)) is the PPIase FKBP-type domain.

This sequence belongs to the FKBP-type PPIase family. Tig subfamily.

It is found in the cytoplasm. It catalyses the reaction [protein]-peptidylproline (omega=180) = [protein]-peptidylproline (omega=0). Its function is as follows. Involved in protein export. Acts as a chaperone by maintaining the newly synthesized protein in an open conformation. Functions as a peptidyl-prolyl cis-trans isomerase. The polypeptide is Trigger factor (Streptococcus pyogenes serotype M49 (strain NZ131)).